A 180-amino-acid chain; its full sequence is Der GTPase-activating protein YihI (180 aa).

Disordered regions lie at residues 1 to 87 (MSRK…MTKQ) and 142 to 180 (GLLEPEEEEDFTASSAKGSRNDDDLLADFDDINFDDYKG). Residues 23-32 (NRTESDVEGR) are compositionally biased toward basic and acidic residues. A compositionally biased stretch (basic residues) spans 33–43 (LRKRAKKRKGL). Residues 51–68 (EVNEQKKQSSEQNRDPRL) show a composition bias toward basic and acidic residues. The span at 165–180 (DLLADFDDINFDDYKG) shows a compositional bias: acidic residues.

The protein belongs to the YihI family. In terms of assembly, interacts with Der.

Functionally, a GTPase-activating protein (GAP) that modifies Der/EngA GTPase function. May play a role in ribosome biogenesis. In Vibrio parahaemolyticus serotype O3:K6 (strain RIMD 2210633), this protein is Der GTPase-activating protein YihI.